Reading from the N-terminus, the 456-residue chain is Kynurenine 3-monooxygenase (456 aa).

It belongs to the aromatic-ring hydroxylase family. KMO subfamily. FAD is required as a cofactor.

It localises to the mitochondrion outer membrane. It carries out the reaction L-kynurenine + NADPH + O2 + H(+) = 3-hydroxy-L-kynurenine + NADP(+) + H2O. The protein operates within cofactor biosynthesis; NAD(+) biosynthesis; quinolinate from L-kynurenine: step 1/3. Its function is as follows. Catalyzes the hydroxylation of L-kynurenine (L-Kyn) to form 3-hydroxy-L-kynurenine (L-3OHKyn). Required for synthesis of quinolinic acid. The chain is Kynurenine 3-monooxygenase from Candida albicans (strain SC5314 / ATCC MYA-2876) (Yeast).